The sequence spans 517 residues: Bifunctional purine biosynthesis protein PurH (517 aa).

The MGS-like domain maps to M1–T146.

This sequence belongs to the PurH family.

The enzyme catalyses (6R)-10-formyltetrahydrofolate + 5-amino-1-(5-phospho-beta-D-ribosyl)imidazole-4-carboxamide = 5-formamido-1-(5-phospho-D-ribosyl)imidazole-4-carboxamide + (6S)-5,6,7,8-tetrahydrofolate. It catalyses the reaction IMP + H2O = 5-formamido-1-(5-phospho-D-ribosyl)imidazole-4-carboxamide. The protein operates within purine metabolism; IMP biosynthesis via de novo pathway; 5-formamido-1-(5-phospho-D-ribosyl)imidazole-4-carboxamide from 5-amino-1-(5-phospho-D-ribosyl)imidazole-4-carboxamide (10-formyl THF route): step 1/1. It participates in purine metabolism; IMP biosynthesis via de novo pathway; IMP from 5-formamido-1-(5-phospho-D-ribosyl)imidazole-4-carboxamide: step 1/1. The polypeptide is Bifunctional purine biosynthesis protein PurH (Prochlorococcus marinus (strain MIT 9303)).